Reading from the N-terminus, the 339-residue chain is Phenylalanine--tRNA ligase alpha subunit (339 aa).

Glu254 lines the Mg(2+) pocket.

It belongs to the class-II aminoacyl-tRNA synthetase family. Phe-tRNA synthetase alpha subunit type 1 subfamily. In terms of assembly, tetramer of two alpha and two beta subunits. Requires Mg(2+) as cofactor.

Its subcellular location is the cytoplasm. It catalyses the reaction tRNA(Phe) + L-phenylalanine + ATP = L-phenylalanyl-tRNA(Phe) + AMP + diphosphate + H(+). The polypeptide is Phenylalanine--tRNA ligase alpha subunit (Dictyoglomus turgidum (strain DSM 6724 / Z-1310)).